Reading from the N-terminus, the 441-residue chain is Glutamate--tRNA ligase 1 (441 aa).

Positions 7-17 (PSPTGYMHIGN) match the 'HIGH' region motif. Residues 236–240 (KMSKR) carry the 'KMSKS' region motif. Position 239 (Lys239) interacts with ATP.

The protein belongs to the class-I aminoacyl-tRNA synthetase family. Glutamate--tRNA ligase type 1 subfamily. In terms of assembly, monomer.

It is found in the cytoplasm. The catalysed reaction is tRNA(Glu) + L-glutamate + ATP = L-glutamyl-tRNA(Glu) + AMP + diphosphate. Its function is as follows. Catalyzes the attachment of glutamate to tRNA(Glu) in a two-step reaction: glutamate is first activated by ATP to form Glu-AMP and then transferred to the acceptor end of tRNA(Glu). The chain is Glutamate--tRNA ligase 1 from Anaplasma marginale (strain St. Maries).